Here is a 231-residue protein sequence, read N- to C-terminus: NDR1/HIN1-like protein 3 (231 aa).

The helical transmembrane segment at 47–67 threads the bilayer; it reads VIFNILITIAVLLGIAALIIW. 4 N-linked (GlcNAc...) asparagine glycosylation sites follow: Asn102, Asn135, Asn145, and Asn215.

As to quaternary structure, may form oligomers or be a component of larger protein complex in plasma membranes. Post-translationally, glycosylated. Expressed in roots, young and senescing leaves, cauline leaves, stems and siliques.

Its subcellular location is the cell membrane. Functionally, confers resistance to Pseudomonas syringae pv. tomato DC3000 (Pst DC3000). The polypeptide is NDR1/HIN1-like protein 3 (Arabidopsis thaliana (Mouse-ear cress)).